The primary structure comprises 309 residues: MPDLAHVIREISEEMAQRSDRGAVADYIPELARVDPDQFGMAVIDAEGQVFTGGDSETPFSIQSVSKVFTLTLALGMVGDRLWKRVGREPSGNPFNSIVQLERERGVPRNPFINAGAIAVTDVILSGHEPREALGEILRFMQFLAQDSGIIIDETVAASEKRTGFRNTALANYMKSFGVIDNPVDYTLGVYFHHCAIAMNCRQLARAGRFLAHNGVNPSTGHSVVSAERARRINAIMLTCGHYDGSGEFAYRVGLPGKSGVGGSILAIAPGKASIAVWSPGLDAAGNSHLGRIALERLTQRMGWSVFGA.

The substrate site is built by Ser64, Asn114, Glu160, Asn167, Tyr191, Tyr243, and Val261.

It belongs to the glutaminase family. In terms of assembly, homotetramer.

It catalyses the reaction L-glutamine + H2O = L-glutamate + NH4(+). The chain is Glutaminase from Methylobacterium radiotolerans (strain ATCC 27329 / DSM 1819 / JCM 2831 / NBRC 15690 / NCIMB 10815 / 0-1).